Reading from the N-terminus, the 84-residue chain is Omega-conotoxin-like ArMKLT1-02 (84 aa).

Residues 1–22 (MKVTCMMIVAVLFLTAWTFVTA) form the signal peptide. The propeptide occupies 23–51 (DDSISALEDLFAKAHDKMENSEASPLNER). 3 disulfide bridges follow: Cys53/Cys71, Cys60/Cys75, and Cys70/Cys79.

This sequence belongs to the conotoxin O1 superfamily. In terms of tissue distribution, expressed by the venom duct.

The protein localises to the secreted. Functionally, omega-conotoxins act at presynaptic membranes, they bind and block voltage-gated calcium channels (Cav). This chain is Omega-conotoxin-like ArMKLT1-02, found in Conus arenatus (Sand-dusted cone).